Here is a 146-residue protein sequence, read N- to C-terminus: Cyanate hydratase (146 aa).

Residues arginine 87, glutamate 90, and serine 113 contribute to the active site.

The protein belongs to the cyanase family.

It catalyses the reaction cyanate + hydrogencarbonate + 3 H(+) = NH4(+) + 2 CO2. Catalyzes the reaction of cyanate with bicarbonate to produce ammonia and carbon dioxide. In Trichormus variabilis (strain ATCC 29413 / PCC 7937) (Anabaena variabilis), this protein is Cyanate hydratase.